We begin with the raw amino-acid sequence, 540 residues long: Glucose-6-phosphate isomerase (540 aa).

The active-site Proton donor is the Glu-350. Active-site residues include His-381 and Lys-503.

This sequence belongs to the GPI family.

The protein resides in the cytoplasm. It catalyses the reaction alpha-D-glucose 6-phosphate = beta-D-fructose 6-phosphate. It participates in carbohydrate biosynthesis; gluconeogenesis. It functions in the pathway carbohydrate degradation; glycolysis; D-glyceraldehyde 3-phosphate and glycerone phosphate from D-glucose: step 2/4. In terms of biological role, catalyzes the reversible isomerization of glucose-6-phosphate to fructose-6-phosphate. This Burkholderia cenocepacia (strain ATCC BAA-245 / DSM 16553 / LMG 16656 / NCTC 13227 / J2315 / CF5610) (Burkholderia cepacia (strain J2315)) protein is Glucose-6-phosphate isomerase.